Consider the following 445-residue polypeptide: Argininosuccinate synthase (445 aa).

Residues 17–25 (AFSGGLDTS) and Ala-43 contribute to the ATP site. L-citrulline is bound at residue Tyr-99. ATP contacts are provided by Gly-129 and Thr-131. Residues Thr-131, Asn-135, and Asp-136 each coordinate L-aspartate. Asn-135 serves as a coordination point for L-citrulline. ATP is bound at residue Asp-136. The L-citrulline site is built by Arg-139 and Ser-192. Residue Asp-194 participates in ATP binding. L-citrulline contacts are provided by Thr-201, Glu-203, and Glu-280.

The protein belongs to the argininosuccinate synthase family. Type 2 subfamily. As to quaternary structure, homotetramer.

It is found in the cytoplasm. It carries out the reaction L-citrulline + L-aspartate + ATP = 2-(N(omega)-L-arginino)succinate + AMP + diphosphate + H(+). It participates in amino-acid biosynthesis; L-arginine biosynthesis; L-arginine from L-ornithine and carbamoyl phosphate: step 2/3. In Bradyrhizobium sp. (strain BTAi1 / ATCC BAA-1182), this protein is Argininosuccinate synthase.